Consider the following 899-residue polypeptide: Protein argonaute (899 aa).

The disordered stretch occupies residues 107–129 (TQKPKRRGGRAGGMRGNRGGPST). The span at 116 to 125 (RAGGMRGNRG) shows a compositional bias: gly residues. The PAZ domain occupies 229–313 (SMCELLNENR…KQDDYCNSVL (85 aa)). The 324-residue stretch at 555–878 (LVVVVIPGPK…LSKFCGEILG (324 aa)) folds into the Piwi domain.

It belongs to the argonaute family. Ago subfamily. As to quaternary structure, interacts with miR2. Highly specific binding to the mRNA m7G-cap. May be a component of the RNA-induced silencing complex (RISC), a sequence-specific, multicomponent nuclease that destroys or silences messenger RNAs homologous to the silencing trigger.

It localises to the cytoplasm. Functionally, plays an essential role in growth and, with Dicer, also involved in microRNA (miRNA)-mediated translational repression. The RNA interference pathway is implicated in antigenic variation having a role in regulation of variant-specific surface protein (VSP)-coding gene expression. Several VSP genes are transcribed but only transcripts encoding the VSP to be expressed accumulate. Antisense RNAs corresponding to the silenced VSP genes are detected. The protein is Protein argonaute of Giardia intestinalis (strain ATCC 50581 / GS clone H7) (Giardia lamblia).